Consider the following 170-residue polypeptide: Large ribosomal subunit protein uL5 (170 aa).

Belongs to the universal ribosomal protein uL5 family. Component of the large ribosomal subunit.

Its subcellular location is the nucleus. It is found in the cytoplasm. Component of the ribosome, a large ribonucleoprotein complex responsible for the synthesis of proteins in the cell. The small ribosomal subunit (SSU) binds messenger RNAs (mRNAs) and translates the encoded message by selecting cognate aminoacyl-transfer RNA (tRNA) molecules. The large subunit (LSU) contains the ribosomal catalytic site termed the peptidyl transferase center (PTC), which catalyzes the formation of peptide bonds, thereby polymerizing the amino acids delivered by tRNAs into a polypeptide chain. The nascent polypeptides leave the ribosome through a tunnel in the LSU and interact with protein factors that function in enzymatic processing, targeting, and the membrane insertion of nascent chains at the exit of the ribosomal tunnel. The chain is Large ribosomal subunit protein uL5 (RPL11) from Chlamydomonas reinhardtii (Chlamydomonas smithii).